Consider the following 37-residue polypeptide: Large ribosomal subunit protein bL36 (37 aa).

This sequence belongs to the bacterial ribosomal protein bL36 family.

The protein is Large ribosomal subunit protein bL36 of Moorella thermoacetica (strain ATCC 39073 / JCM 9320).